Reading from the N-terminus, the 269-residue chain is Undecaprenyl-diphosphatase (269 aa).

A run of 7 helical transmembrane segments spans residues 40-59 (GITFDVALHLGTLIALALYF), 87-107 (WYIIAGCVPAAIVGKTLEEPI), 116-136 (AIIAAFLIGFGLLLALADTLG), 160-180 (ALLPGVSRSGITITAALFLGF), 188-208 (FSFLLSLPIVAGAALLKVGHL), 220-240 (PLLIGVGVSAVFGYVSVALLL), and 247-267 (SLYPFVWYRLLAGAGVLLFIF).

It belongs to the UppP family.

The protein localises to the cell inner membrane. It catalyses the reaction di-trans,octa-cis-undecaprenyl diphosphate + H2O = di-trans,octa-cis-undecaprenyl phosphate + phosphate + H(+). Its function is as follows. Catalyzes the dephosphorylation of undecaprenyl diphosphate (UPP). Confers resistance to bacitracin. This Geobacter metallireducens (strain ATCC 53774 / DSM 7210 / GS-15) protein is Undecaprenyl-diphosphatase.